The chain runs to 369 residues: Peptide chain release factor 2 (369 aa).

Gln-249 is subject to N5-methylglutamine.

This sequence belongs to the prokaryotic/mitochondrial release factor family. Post-translationally, methylated by PrmC. Methylation increases the termination efficiency of RF2.

Its subcellular location is the cytoplasm. Functionally, peptide chain release factor 2 directs the termination of translation in response to the peptide chain termination codons UGA and UAA. The polypeptide is Peptide chain release factor 2 (Corynebacterium diphtheriae (strain ATCC 700971 / NCTC 13129 / Biotype gravis)).